A 383-amino-acid chain; its full sequence is Histidinol-phosphate aminotransferase (383 aa).

Lysine 240 is modified (N6-(pyridoxal phosphate)lysine).

This sequence belongs to the class-II pyridoxal-phosphate-dependent aminotransferase family. Histidinol-phosphate aminotransferase subfamily. As to quaternary structure, homodimer. It depends on pyridoxal 5'-phosphate as a cofactor.

It catalyses the reaction L-histidinol phosphate + 2-oxoglutarate = 3-(imidazol-4-yl)-2-oxopropyl phosphate + L-glutamate. It functions in the pathway amino-acid biosynthesis; L-histidine biosynthesis; L-histidine from 5-phospho-alpha-D-ribose 1-diphosphate: step 7/9. This chain is Histidinol-phosphate aminotransferase, found in Oleidesulfovibrio alaskensis (strain ATCC BAA-1058 / DSM 17464 / G20) (Desulfovibrio alaskensis).